The primary structure comprises 177 residues: Transmembrane protein 190 (177 aa).

An N-terminal signal peptide occupies residues 1 to 21; sequence MLGCGIPALGLLLLLQGSADG. The Extracellular portion of the chain corresponds to 22 to 81; sequence NGIQGFFYPWSCEGDIWDRESCGGQAAIDSPNLCLRLRCCYRNGVCYHQRPDENVRRKHM. The P-type domain maps to 31 to 71; that stretch reads WSCEGDIWDRESCGGQAAIDSPNLCLRLRCCYRNGVCYHQR. 3 disulfides stabilise this stretch: C33–C61, C43–C60, and C55–C67. The chain crosses the membrane as a helical span at residues 82–102; sequence WALVWTCSGLLLLSCSICLFW. The Cytoplasmic segment spans residues 103-177; sequence WAKRRDVLHM…EETEGEEEED (75 aa). Residues 131 to 177 are disordered; sequence KHRGTKKTPSTGSVPVALSKESRDVEGGTEGEGTEEGEETEGEEEED. The segment covering 157–177 has biased composition (acidic residues); the sequence is GGTEGEGTEEGEETEGEEEED.

The protein resides in the membrane. This chain is Transmembrane protein 190 (TMEM190), found in Homo sapiens (Human).